A 361-amino-acid chain; its full sequence is Phosphoserine aminotransferase (361 aa).

R42 contacts L-glutamate. Pyridoxal 5'-phosphate is bound by residues 76–77, W102, T154, D173, and Q196; that span reads GR. The residue at position 197 (K197) is an N6-(pyridoxal phosphate)lysine. Pyridoxal 5'-phosphate is bound at residue 238 to 239; it reads NT.

It belongs to the class-V pyridoxal-phosphate-dependent aminotransferase family. SerC subfamily. Homodimer. It depends on pyridoxal 5'-phosphate as a cofactor.

It is found in the cytoplasm. The catalysed reaction is O-phospho-L-serine + 2-oxoglutarate = 3-phosphooxypyruvate + L-glutamate. The enzyme catalyses 4-(phosphooxy)-L-threonine + 2-oxoglutarate = (R)-3-hydroxy-2-oxo-4-phosphooxybutanoate + L-glutamate. It functions in the pathway amino-acid biosynthesis; L-serine biosynthesis; L-serine from 3-phospho-D-glycerate: step 2/3. Its pathway is cofactor biosynthesis; pyridoxine 5'-phosphate biosynthesis; pyridoxine 5'-phosphate from D-erythrose 4-phosphate: step 3/5. Its function is as follows. Catalyzes the reversible conversion of 3-phosphohydroxypyruvate to phosphoserine and of 3-hydroxy-2-oxo-4-phosphonooxybutanoate to phosphohydroxythreonine. In Idiomarina loihiensis (strain ATCC BAA-735 / DSM 15497 / L2-TR), this protein is Phosphoserine aminotransferase.